Here is a 137-residue protein sequence, read N- to C-terminus: Envelope glycoprotein L (137 aa).

A signal peptide spans 1 to 22 (MRAVGVFLAICLVTIFVLPTWG). The segment at 23–128 (NWAYPCCHVT…SVEDLFGANL (106 aa)) is interaction with gH. Intrachain disulfides connect Cys-28–Cys-56 and Cys-29–Cys-79.

The protein belongs to the herpesviridae glycoprotein L family. Interacts with glycoprotein H (gH); this interaction is necessary for the correct processing and cell surface expression of gH. The heterodimer gH/gL seems to interact with gB trimers during fusion. The heterodimer gH/gL interacts with host EPHA2 to facilitate virus internalization and fusion.

It localises to the virion membrane. It is found in the host cell membrane. The protein resides in the host Golgi apparatus. The protein localises to the host trans-Golgi network. Functionally, the heterodimer glycoprotein H-glycoprotein L is required for the fusion of viral and plasma membranes leading to virus entry into the host cell. Acts as a functional inhibitor of gH and maintains gH in an inhibited form. Upon binding to host integrins, gL dissociates from gH leading to activation of the viral fusion glycoproteins gB and gH. Fusion of EBV with B-lymphocytes requires the additional receptor-binding protein gp42, which forms a complex with gH/gL. The heterodimer gH/gL targets also host EPHA2 to promote viral entry. The polypeptide is Envelope glycoprotein L (Homo sapiens (Human)).